The chain runs to 213 residues: ATP phosphoribosyltransferase (213 aa).

It belongs to the ATP phosphoribosyltransferase family. Short subfamily. As to quaternary structure, heteromultimer composed of HisG and HisZ subunits.

It is found in the cytoplasm. The catalysed reaction is 1-(5-phospho-beta-D-ribosyl)-ATP + diphosphate = 5-phospho-alpha-D-ribose 1-diphosphate + ATP. Its pathway is amino-acid biosynthesis; L-histidine biosynthesis; L-histidine from 5-phospho-alpha-D-ribose 1-diphosphate: step 1/9. Functionally, catalyzes the condensation of ATP and 5-phosphoribose 1-diphosphate to form N'-(5'-phosphoribosyl)-ATP (PR-ATP). Has a crucial role in the pathway because the rate of histidine biosynthesis seems to be controlled primarily by regulation of HisG enzymatic activity. The protein is ATP phosphoribosyltransferase of Listeria monocytogenes serotype 4a (strain HCC23).